The chain runs to 134 residues: Small ribosomal subunit protein uS9 (134 aa).

The disordered stretch occupies residues 113–134 (REVERKKYGLKKARRAPQFSKR). Residues 120 to 134 (YGLKKARRAPQFSKR) show a composition bias toward basic residues.

Belongs to the universal ribosomal protein uS9 family.

This is Small ribosomal subunit protein uS9 (rpsI) from Thermotoga maritima (strain ATCC 43589 / DSM 3109 / JCM 10099 / NBRC 100826 / MSB8).